A 1778-amino-acid chain; its full sequence is Ankyrin repeat domain-containing protein 36C (1778 aa).

ANK repeat units follow at residues 64–93 (KERT…ELNL), 97–126 (EDRT…DPNI), 130–159 (FGRT…NIEE), 163–192 (DEYP…NINA), and 196–225 (LGRS…DVFS). Disordered regions lie at residues 260-365 (LSIN…DEQK), 501-526 (ALPA…VKDS), 538-653 (DSLT…QKQS), 671-1027 (RITG…QKQL), and 1051-1072 (IRGT…EKDS). Polar residues-rich tracts occupy residues 261-272 (SINSNPVSSQKQ) and 297-306 (KSGTVSSQKQ). The span at 539-555 (SLTSSEESSERPPLSTL) shows a compositional bias: low complexity. Composition is skewed to basic and acidic residues over residues 585–596 (PAEKATSDDKDS) and 619–630 (PAEKATSDEKDS). Polar residues-rich tracts occupy residues 631–653 (VSNI…QKQS) and 679–691 (GTVS…PSKA). Basic and acidic residues predominate over residues 794-813 (TSDEKDSFSNITREKKDGEI). Ser829 is modified (phosphoserine). 2 stretches are compositionally biased toward basic and acidic residues: residues 840–849 (RGKEDGEKTR) and 862–881 (TSDE…DGET). A Phosphoserine modification is found at Ser897. Positions 907-917 (AREKKDGEKSR) are enriched in basic and acidic residues. The span at 942–955 (RGKKHGEKTRRVSS) shows a compositional bias: basic residues. Polar residues-rich tracts occupy residues 983–992 (ISGTVSSQKQ) and 1005–1026 (VSNI…SQKQ). Coiled-coil stretches lie at residues 1157–1187 (EQDL…QIHS), 1247–1333 (ELKD…YRIE), 1362–1480 (SETD…DHDQ), and 1544–1768 (VFEH…ILQH).

Belongs to the ANKRD36 family.

This Homo sapiens (Human) protein is Ankyrin repeat domain-containing protein 36C (ANKRD36C).